We begin with the raw amino-acid sequence, 447 residues long: Protein king tubby (447 aa).

2 stretches are compositionally biased toward low complexity: residues 71–92 and 157–169; these read GTGP…YSDS and NNNN…NSSS. Residues 71 to 196 are disordered; sequence GTGPNVTATS…GGAPDTEGDV (126 aa).

Belongs to the TUB family.

The protein resides in the cytoplasm. Its subcellular location is the nucleus. This chain is Protein king tubby, found in Anopheles gambiae (African malaria mosquito).